The sequence spans 443 residues: Phosphoglucosamine mutase (443 aa).

Serine 103 acts as the Phosphoserine intermediate in catalysis. 4 residues coordinate Mg(2+): serine 103, aspartate 244, aspartate 246, and aspartate 248. Serine 103 is modified (phosphoserine).

This sequence belongs to the phosphohexose mutase family. Requires Mg(2+) as cofactor. Post-translationally, activated by phosphorylation.

It catalyses the reaction alpha-D-glucosamine 1-phosphate = D-glucosamine 6-phosphate. Functionally, catalyzes the conversion of glucosamine-6-phosphate to glucosamine-1-phosphate. This Pelagibacter ubique (strain HTCC1062) protein is Phosphoglucosamine mutase.